The sequence spans 361 residues: Holliday junction branch migration complex subunit RuvB (361 aa).

Residues 1-183 are large ATPase domain (RuvB-L); the sequence is MAEPSLVAAG…FGFTGHLEFY (183 aa). Residues Leu-22, Arg-23, Gly-64, Lys-67, Thr-68, Thr-69, 130–132, Arg-173, Tyr-183, and Arg-220 each bind ATP; that span reads EDF. Mg(2+) is bound at residue Thr-68. The tract at residues 184–254 is small ATPAse domain (RuvB-S); that stretch reads SVPELELVLR…SASAALDMYE (71 aa). Positions 257–361 are head domain (RuvB-H); the sequence is KKGLDRLDRS…VTGEWAPESQ (105 aa). 2 residues coordinate DNA: Arg-312 and Arg-317.

This sequence belongs to the RuvB family. As to quaternary structure, homohexamer. Forms an RuvA(8)-RuvB(12)-Holliday junction (HJ) complex. HJ DNA is sandwiched between 2 RuvA tetramers; dsDNA enters through RuvA and exits via RuvB. An RuvB hexamer assembles on each DNA strand where it exits the tetramer. Each RuvB hexamer is contacted by two RuvA subunits (via domain III) on 2 adjacent RuvB subunits; this complex drives branch migration. In the full resolvosome a probable DNA-RuvA(4)-RuvB(12)-RuvC(2) complex forms which resolves the HJ.

The protein resides in the cytoplasm. The catalysed reaction is ATP + H2O = ADP + phosphate + H(+). Its function is as follows. The RuvA-RuvB-RuvC complex processes Holliday junction (HJ) DNA during genetic recombination and DNA repair, while the RuvA-RuvB complex plays an important role in the rescue of blocked DNA replication forks via replication fork reversal (RFR). RuvA specifically binds to HJ cruciform DNA, conferring on it an open structure. The RuvB hexamer acts as an ATP-dependent pump, pulling dsDNA into and through the RuvAB complex. RuvB forms 2 homohexamers on either side of HJ DNA bound by 1 or 2 RuvA tetramers; 4 subunits per hexamer contact DNA at a time. Coordinated motions by a converter formed by DNA-disengaged RuvB subunits stimulates ATP hydrolysis and nucleotide exchange. Immobilization of the converter enables RuvB to convert the ATP-contained energy into a lever motion, pulling 2 nucleotides of DNA out of the RuvA tetramer per ATP hydrolyzed, thus driving DNA branch migration. The RuvB motors rotate together with the DNA substrate, which together with the progressing nucleotide cycle form the mechanistic basis for DNA recombination by continuous HJ branch migration. Branch migration allows RuvC to scan DNA until it finds its consensus sequence, where it cleaves and resolves cruciform DNA. The protein is Holliday junction branch migration complex subunit RuvB of Pseudarthrobacter chlorophenolicus (strain ATCC 700700 / DSM 12829 / CIP 107037 / JCM 12360 / KCTC 9906 / NCIMB 13794 / A6) (Arthrobacter chlorophenolicus).